The chain runs to 351 residues: sn-glycerol-3-phosphate import ATP-binding protein UgpC (351 aa).

Residues 4 to 235 form the ABC transporter domain; it reads IVLDNVRKSY…PASTFVATFI (232 aa). Residue 37-44 participates in ATP binding; that stretch reads GPSGCGKS.

This sequence belongs to the ABC transporter superfamily. sn-glycerol-3-phosphate importer (TC 3.A.1.1.3) family. In terms of assembly, the complex is composed of two ATP-binding proteins (UgpC), two transmembrane proteins (UgpA and UgpE) and a solute-binding protein (UgpB).

It is found in the cell inner membrane. It carries out the reaction sn-glycerol 3-phosphate(out) + ATP + H2O = sn-glycerol 3-phosphate(in) + ADP + phosphate + H(+). Its function is as follows. Part of the ABC transporter complex UgpBAEC involved in sn-glycerol-3-phosphate (G3P) import. Responsible for energy coupling to the transport system. This is sn-glycerol-3-phosphate import ATP-binding protein UgpC from Brucella abortus (strain 2308).